Here is a 260-residue protein sequence, read N- to C-terminus: Factor V activator RVV-V gamma (260 aa).

The signal sequence occupies residues 1-18 (MVLIKVLANLLVLQLSYA). The propeptide occupies 19–24 (QKSSEL). The region spanning 25-251 (VVGGDECNIN…YNNWIQSIIA (227 aa)) is the Peptidase S1 domain. 6 disulfide bridges follow: Cys-31/Cys-165, Cys-52/Cys-68, Cys-100/Cys-258, Cys-144/Cys-212, Cys-176/Cys-191, and Cys-202/Cys-227. Residues His-67 and Asp-112 each act as charge relay system in the active site. The Charge relay system role is filled by Ser-206. The N-linked (GlcNAc...) asparagine glycan is linked to Asn-253.

The protein belongs to the peptidase S1 family. Snake venom subfamily. In terms of assembly, monomer. As to expression, expressed by the venom gland.

It is found in the secreted. The enzyme catalyses Fully activates human clotting factor V by a single cleavage at the 1545-Trp-Tyr-Leu-Arg-|-Ser-Asn-Asn-Gly-1552 bond. Cattle, but not rabbit, factor V is cleaved, and no other proteins of the clotting system are attacked. Esterase activity is observed on Bz-Arg-OEt and Tos-Arg-OMe, and amidase activity on Phe-pipecolyl-Arg-NHPhNO2.. Functionally, venom serine protease that selectively activates factor V (F5) in a calcium-independent manner. It cleaves the Arg(1545)-Ser(1546) linkage in the human factor V molecule. Induces the coagulation of mammalian plasma. This chain is Factor V activator RVV-V gamma, found in Daboia siamensis (Eastern Russel's viper).